The following is a 3994-amino-acid chain: Hybrid PKS-NRPs synthetase opdA (3994 aa).

Residues P6 to S442 enclose the Ketosynthase family 3 (KS3) domain. Residues C179, H316, and H362 each act as for beta-ketoacyl synthase activity in the active site. The tract at residues V559 to A881 is malonyl-CoA:ACP transacylase (MAT) domain. An N-terminal hotdog fold region spans residues H951–T1085. The interval H951–A1251 is dehydratase (DH) domain. A PKS/mFAS DH domain is found at H951–E1252. Residue H983 is the Proton acceptor; for dehydratase activity of the active site. The segment at L1100–E1252 is C-terminal hotdog fold. D1159 (proton donor; for dehydratase activity) is an active-site residue. The interval D1292–D1593 is methyltransferase (MT) domain. The ketoreductase (KR) domain stretch occupies residues T2123 to T2297. Positions E2406–L2483 constitute a Carrier 1 domain. The residue at position 2443 (S2443) is an O-(pantetheine 4'-phosphoryl)serine. Residues Q2486 to P2575 form a disordered region. Composition is skewed to polar residues over residues L2505–T2514 and T2522–D2546. The segment covering T2547 to I2556 has biased composition (basic and acidic residues). The span at S2557–D2570 shows a compositional bias: acidic residues. The condensation (C) domain stretch occupies residues R2582–I3007. The adenylation (A) (KR) domain stretch occupies residues H3043–L3436. Residues P3553–R3630 enclose the Carrier 2 domain. S3590 carries the O-(pantetheine 4'-phosphoryl)serine modification. The tract at residues T3679–A3895 is reductase (RED) domain.

It in the C-terminal section; belongs to the NRP synthetase family. It depends on pantetheine 4'-phosphate as a cofactor.

It functions in the pathway secondary metabolite biosynthesis. In terms of biological role, hybrid PKS-NRPS synthetase; part of the gene cluster that mediates the biosynthesis of oxopyrrolidines, polyketide-amino acid hybrid compounds with feature structures of tetramic acid. The polyketide chain is first assembled by the highly reducing PKS module of opdA using acetyl-CoA as the starter unit and five malonyl-CoA as the extender units. OpdC acts as trans-acting enoyl reductase and reduces the terminal alkenyl to alkane. The 17R in oxopyrrolidine A and 15R, 17S in oxopyrrolidine B are generated by non-stereospecific catalysis of the ketoreductase (KR) domain and enoyl reductases. Then the polyketides with specific configurations are transferred to the NRPS module of opdA and linked to L-tyrosine to form an amide bond. Finally, the oxopyrrolidines are offloaded through a Dieckmann cyclization catalyzed by the terminal D domain to give a tetramic acid moiety. This Penicillium oxalicum (strain 114-2 / CGMCC 5302) (Penicillium decumbens) protein is Hybrid PKS-NRPs synthetase opdA.